We begin with the raw amino-acid sequence, 1548 residues long: Dicer-like protein 1 (1548 aa).

Residues 1–41 (MGDPAAHEMADLERGFSSEDDAEYRSGDDEASKFVENEPSK) show a composition bias toward basic and acidic residues. The interval 1–48 (MGDPAAHEMADLERGFSSEDDAEYRSGDDEASKFVENEPSKRGKISQK) is disordered. Residues 106–289 (LFERAKQQNT…QAAIELEGLL (184 aa)) form the Helicase ATP-binding domain. 119–126 (LDTGSGKT) provides a ligand contact to ATP. A DEAH box motif is present at residues 232–235 (DEAH). The Helicase C-terminal domain occupies 428–589 (TLSKLLEEYF…FCNTQPEDRL (162 aa)). The 95-residue stretch at 624 to 718 (SLPILQAFLN…RSKFVEKRHV (95 aa)) folds into the Dicer dsRNA-binding fold domain. The region spanning 871 to 1006 (PLLRHVADRD…FVLEPMRISP (136 aa)) is the PAZ domain. RNase III domains follow at residues 1051–1197 (LTKD…MTTR) and 1248–1411 (AQKI…VDSK). The Mg(2+) site is built by glutamate 1288, aspartate 1397, and glutamate 1400. Residues 1445 to 1518 (TFFTQYVFET…ARKALDKLRS (74 aa)) form the DRBM domain. Zn(2+) contacts are provided by cysteine 1457, histidine 1489, cysteine 1530, and cysteine 1532.

This sequence belongs to the helicase family. Dicer subfamily. It depends on Mg(2+) as a cofactor. Mn(2+) is required as a cofactor.

Functionally, dicer-like endonuclease involved in cleaving double-stranded RNA in the RNA interference (RNAi) pathway. Produces 21 to 25 bp dsRNAs (siRNAs) which target the selective destruction of homologous RNAs leading to sequence-specific suppression of gene expression, called post-transcriptional gene silencing (PTGS). Part of a broad host defense response against viral infection and transposons. The sequence is that of Dicer-like protein 1 (DCL-1) from Cryphonectria parasitica (Chestnut blight fungus).